Consider the following 388-residue polypeptide: Chorismate synthase (388 aa).

NADP(+)-binding residues include Arg39 and Arg45. FMN-binding positions include 130–132 (RSS), 251–252 (NA), Gly296, 311–315 (KPIPT), and Arg337.

It belongs to the chorismate synthase family. Homotetramer. Requires FMNH2 as cofactor.

The enzyme catalyses 5-O-(1-carboxyvinyl)-3-phosphoshikimate = chorismate + phosphate. It participates in metabolic intermediate biosynthesis; chorismate biosynthesis; chorismate from D-erythrose 4-phosphate and phosphoenolpyruvate: step 7/7. Functionally, catalyzes the anti-1,4-elimination of the C-3 phosphate and the C-6 proR hydrogen from 5-enolpyruvylshikimate-3-phosphate (EPSP) to yield chorismate, which is the branch point compound that serves as the starting substrate for the three terminal pathways of aromatic amino acid biosynthesis. This reaction introduces a second double bond into the aromatic ring system. The polypeptide is Chorismate synthase (Streptococcus sanguinis (strain SK36)).